Here is a 151-residue protein sequence, read N- to C-terminus: Cell division control protein 2 homolog 2 (151 aa).

One can recognise a Protein kinase domain in the interval Ala1–Leu151. Lys3 serves as a coordination point for ATP. Asp113 functions as the Proton acceptor in the catalytic mechanism.

Belongs to the protein kinase superfamily. CMGC Ser/Thr protein kinase family. CDC2/CDKX subfamily.

It catalyses the reaction L-seryl-[protein] + ATP = O-phospho-L-seryl-[protein] + ADP + H(+). The enzyme catalyses L-threonyl-[protein] + ATP = O-phospho-L-threonyl-[protein] + ADP + H(+). It carries out the reaction [DNA-directed RNA polymerase] + ATP = phospho-[DNA-directed RNA polymerase] + ADP + H(+). This is Cell division control protein 2 homolog 2 from Pisum sativum (Garden pea).